A 606-amino-acid polypeptide reads, in one-letter code: Leucine-rich repeat and immunoglobulin-like domain-containing nogo receptor-interacting protein 1 (606 aa).

A signal peptide spans 1 to 27 (MILQLPSCLCPILLIVVGSILSGSASG). 2 disulfide bridges follow: Cys28/Cys34 and Cys32/Cys43. One can recognise an LRRNT domain in the interval 28 to 57 (CPQRCDCSPQDRSVLCHRKRYLDVPEGIPT). Topologically, residues 28-547 (CPQRCDCSPQ…FDIKTLIIAT (520 aa)) are extracellular. LRR repeat units lie at residues 58-79 (DTRL…EFSA), 82-103 (YLEE…AFNG), 106-127 (NLRS…VFTG), 130-151 (NLTQ…MFQD), 154-175 (NLKS…AFRG), 178-199 (SLEE…ALSH), 202-223 (GLIT…SFKR), 250-271 (NLTS…AIRH), 274-295 (YLRF…MLYE), 298-319 (RLQE…AFRG), and 322-343 (HLKV…SFHS). An N-linked (GlcNAc...) asparagine glycan is attached at Asn130. Asn188 carries N-linked (GlcNAc...) asparagine glycosylation. Asn250, Asn260, and Asn279 each carry an N-linked (GlcNAc...) asparagine glycan. Asn327, Asn374, Asn478, Asn491, Asn512, Asn523, and Asn528 each carry an N-linked (GlcNAc...) asparagine glycan. An LRRCT domain is found at 355–409 (NPLACDCRLLWIFRRRWRLNFSRQQPSCSSPEYVQGKEFKDFPDVLQPNYFTCRR). Intrachain disulfides connect Cys359/Cys382, Cys361/Cys407, and Cys432/Cys483. Residues 397-496 (PDVLQPNYFT…NAGGNDTSLA (100 aa)) enclose the Ig-like C2-type domain. The chain crosses the membrane as a helical span at residues 548–568 (TMGFISFLGVVLFCLVLLFLW). The Cytoplasmic portion of the chain corresponds to 569–606 (SRGKGNTKHNIEIEYVPRKSDAGLSSADAPRKFNMKMI).

The protein resides in the cell membrane. May play a role in regulating axonal regeneration and plasticity in the adult central nervous system. The chain is Leucine-rich repeat and immunoglobulin-like domain-containing nogo receptor-interacting protein 1 (lingo1) from Xenopus tropicalis (Western clawed frog).